Here is a 35-residue protein sequence, read N- to C-terminus: Photosystem II reaction center protein T (35 aa).

Residues 3–23 (ALVYTFLLVSTLGIIFFAIFF) form a helical membrane-spanning segment.

The protein belongs to the PsbT family. In terms of assembly, PSII is composed of 1 copy each of membrane proteins PsbA, PsbB, PsbC, PsbD, PsbE, PsbF, PsbH, PsbI, PsbJ, PsbK, PsbL, PsbM, PsbT, PsbY, PsbZ, Psb30/Ycf12, at least 3 peripheral proteins of the oxygen-evolving complex and a large number of cofactors. It forms dimeric complexes.

The protein localises to the plastid. It localises to the chloroplast thylakoid membrane. Found at the monomer-monomer interface of the photosystem II (PS II) dimer, plays a role in assembly and dimerization of PSII. PSII is a light-driven water plastoquinone oxidoreductase, using light energy to abstract electrons from H(2)O, generating a proton gradient subsequently used for ATP formation. This Metasequoia glyptostroboides (Dawn redwood) protein is Photosystem II reaction center protein T.